The chain runs to 145 residues: Transcriptional regulator SlyA (145 aa).

An HTH marR-type domain is found at 2-135 (ELPLGSDLAR…LALLVARLEK (134 aa)). Residues 49–72 (QIQLAKAIGIEQPSLVRTLDQLEE) constitute a DNA-binding region (H-T-H motif).

This sequence belongs to the SlyA family. Homodimer.

In terms of biological role, transcription regulator that can specifically activate or repress expression of target genes. This Pectobacterium atrosepticum (strain SCRI 1043 / ATCC BAA-672) (Erwinia carotovora subsp. atroseptica) protein is Transcriptional regulator SlyA.